A 333-amino-acid polypeptide reads, in one-letter code: Lipoyl synthase (333 aa).

Positions 1–29 (MTDSASGASAVANIATPSNEPYDATRKQK) are disordered. Cys-80, Cys-85, Cys-91, Cys-106, Cys-110, Cys-113, and Ser-320 together coordinate [4Fe-4S] cluster. A Radical SAM core domain is found at 91–309 (CFGKGTATFM…EEKAYEMGFT (219 aa)).

This sequence belongs to the radical SAM superfamily. Lipoyl synthase family. The cofactor is [4Fe-4S] cluster.

It is found in the cytoplasm. It catalyses the reaction [[Fe-S] cluster scaffold protein carrying a second [4Fe-4S](2+) cluster] + N(6)-octanoyl-L-lysyl-[protein] + 2 oxidized [2Fe-2S]-[ferredoxin] + 2 S-adenosyl-L-methionine + 4 H(+) = [[Fe-S] cluster scaffold protein] + N(6)-[(R)-dihydrolipoyl]-L-lysyl-[protein] + 4 Fe(3+) + 2 hydrogen sulfide + 2 5'-deoxyadenosine + 2 L-methionine + 2 reduced [2Fe-2S]-[ferredoxin]. The protein operates within protein modification; protein lipoylation via endogenous pathway; protein N(6)-(lipoyl)lysine from octanoyl-[acyl-carrier-protein]: step 2/2. In terms of biological role, catalyzes the radical-mediated insertion of two sulfur atoms into the C-6 and C-8 positions of the octanoyl moiety bound to the lipoyl domains of lipoate-dependent enzymes, thereby converting the octanoylated domains into lipoylated derivatives. This Ralstonia nicotianae (strain ATCC BAA-1114 / GMI1000) (Ralstonia solanacearum) protein is Lipoyl synthase.